The sequence spans 75 residues: MPKYYEEKEEEKHPCGGVKEDLKNCLLQSDCVLQEGKSPKECLKEGYCKALQVTFFECKRSILDNRARFRGRKGY.

Positions 28–66 (QSDCVLQEGKSPKECLKEGYCKALQVTFFECKRSILDNR) constitute a CHCH domain. The Cx10C motif signature appears at 31–42 (CVLQEGKSPKEC). 2 cysteine pairs are disulfide-bonded: Cys31-Cys58 and Cys42-Cys48. The Cx9C motif motif lies at 48-58 (CKALQVTFFEC).

The protein belongs to the PET191 family.

Its function is as follows. Involved in an early step of the mitochondrial complex IV assembly process. The polypeptide is Cytochrome c oxidase assembly factor 5 (coa5) (Xenopus laevis (African clawed frog)).